The sequence spans 344 residues: AA9 family lytic polysaccharide monooxygenase J (344 aa).

Positions 1–20 (MKSSLLVVLTAGLAVRDAIA) are cleaved as a signal peptide. 2 residues coordinate Cu(2+): H21 and H99. A disulfide bond links C58 and C194. Positions 180 and 189 each coordinate O2. Position 191 (Y191) interacts with Cu(2+). A disordered region spans residues 272–301 (PGGKPASGGSDGNAPEVAEPSGGEGSPSAP). Positions 285 to 301 (APEVAEPSGGEGSPSAP) are enriched in low complexity. In terms of domain architecture, CBM1 spans 304–341 (CEVAAYGQCGGDQYSGCTQCASGYTCKAVSPPYYSQCA).

It belongs to the polysaccharide monooxygenase AA9 family. Cu(2+) is required as a cofactor.

The protein resides in the secreted. The enzyme catalyses [(1-&gt;4)-beta-D-glucosyl]n+m + reduced acceptor + O2 = 4-dehydro-beta-D-glucosyl-[(1-&gt;4)-beta-D-glucosyl]n-1 + [(1-&gt;4)-beta-D-glucosyl]m + acceptor + H2O.. Its function is as follows. Lytic polysaccharide monooxygenase (LPMO) that depolymerizes crystalline and amorphous polysaccharides via the oxidation of scissile alpha- or beta-(1-4)-glycosidic bonds, yielding C4 oxidation products. Catalysis by LPMOs requires the reduction of the active-site copper from Cu(II) to Cu(I) by a reducing agent and H(2)O(2) or O(2) as a cosubstrate. The polypeptide is AA9 family lytic polysaccharide monooxygenase J (gh61-10) (Neurospora crassa (strain ATCC 24698 / 74-OR23-1A / CBS 708.71 / DSM 1257 / FGSC 987)).